The primary structure comprises 388 residues: Succinate--CoA ligase [ADP-forming] subunit beta (388 aa).

One can recognise an ATP-grasp domain in the interval 9-245 (KALLKEYGMP…KSQENERELK (237 aa)). Residues lysine 46, 53–55 (GRG), glutamate 100, tyrosine 103, and glutamate 108 contribute to the ATP site. Residues asparagine 200 and aspartate 214 each coordinate Mg(2+). Residues asparagine 265 and 322-324 (GIV) each bind substrate.

This sequence belongs to the succinate/malate CoA ligase beta subunit family. Heterotetramer of two alpha and two beta subunits. The cofactor is Mg(2+).

It carries out the reaction succinate + ATP + CoA = succinyl-CoA + ADP + phosphate. It catalyses the reaction GTP + succinate + CoA = succinyl-CoA + GDP + phosphate. It participates in carbohydrate metabolism; tricarboxylic acid cycle; succinate from succinyl-CoA (ligase route): step 1/1. Succinyl-CoA synthetase functions in the citric acid cycle (TCA), coupling the hydrolysis of succinyl-CoA to the synthesis of either ATP or GTP and thus represents the only step of substrate-level phosphorylation in the TCA. The beta subunit provides nucleotide specificity of the enzyme and binds the substrate succinate, while the binding sites for coenzyme A and phosphate are found in the alpha subunit. This is Succinate--CoA ligase [ADP-forming] subunit beta from Acinetobacter baumannii (strain SDF).